The primary structure comprises 126 residues: MLPAPYRLRDRRAFQALYQAGQRRSGAGLILLFQPMPAGCEGIPSQVGLVIGKKVSKSAVKRNRLRRRLREILRPLCPNLKPGYRLLLISKPNLLTYKWPELQAEVHRLLQKADLLVSPSPDPEPS.

It belongs to the RnpA family. Consists of a catalytic RNA component (M1 or rnpB) and a protein subunit.

The catalysed reaction is Endonucleolytic cleavage of RNA, removing 5'-extranucleotides from tRNA precursor.. Its function is as follows. RNaseP catalyzes the removal of the 5'-leader sequence from pre-tRNA to produce the mature 5'-terminus. It can also cleave other RNA substrates such as 4.5S RNA. The protein component plays an auxiliary but essential role in vivo by binding to the 5'-leader sequence and broadening the substrate specificity of the ribozyme. This is Ribonuclease P protein component from Synechococcus sp. (strain JA-3-3Ab) (Cyanobacteria bacterium Yellowstone A-Prime).